The primary structure comprises 538 residues: Phosphoenolpyruvate carboxykinase (ATP) (538 aa).

Residues Arg-61, Tyr-195, and Lys-201 each coordinate substrate. ATP-binding positions include Lys-201, His-220, and 236 to 244; that span reads GLSGTGKTT. Mn(2+) is bound by residues Lys-201 and His-220. Asp-257 provides a ligand contact to Mn(2+). Glu-285, Arg-323, and Thr-449 together coordinate ATP. Residue Arg-323 participates in substrate binding.

This sequence belongs to the phosphoenolpyruvate carboxykinase (ATP) family. Requires Mn(2+) as cofactor.

The protein resides in the cytoplasm. The enzyme catalyses oxaloacetate + ATP = phosphoenolpyruvate + ADP + CO2. It functions in the pathway carbohydrate biosynthesis; gluconeogenesis. Functionally, involved in the gluconeogenesis. Catalyzes the conversion of oxaloacetate (OAA) to phosphoenolpyruvate (PEP) through direct phosphoryl transfer between the nucleoside triphosphate and OAA. The protein is Phosphoenolpyruvate carboxykinase (ATP) of Nitrobacter hamburgensis (strain DSM 10229 / NCIMB 13809 / X14).